An 89-amino-acid chain; its full sequence is Small ribosomal subunit protein bS20 (89 aa).

The span at 1 to 12 (MANIKSAKKRAK) shows a compositional bias: basic residues. The interval 1–24 (MANIKSAKKRAKQTVVRNERNTGQ) is disordered.

Belongs to the bacterial ribosomal protein bS20 family.

Functionally, binds directly to 16S ribosomal RNA. The sequence is that of Small ribosomal subunit protein bS20 from Xanthomonas campestris pv. campestris (strain 8004).